The sequence spans 144 residues: Small ribosomal subunit protein uS19 (144 aa).

The protein belongs to the universal ribosomal protein uS19 family.

This is Small ribosomal subunit protein uS19 (rps15) from Dictyostelium discoideum (Social amoeba).